A 468-amino-acid chain; its full sequence is N-acyl-phosphatidylethanolamine-hydrolyzing phospholipase D, mitochondrial (468 aa).

Residues 1–39 (MNFVTCHVQMRLLLQRRLVRLRESELFRPQTSLSTFKRH) constitute a mitochondrion transit peptide. Residues 54–76 (YARILLLSVLVPYTGYAFYVSLA) form a helical membrane-spanning segment. The Zn(2+) site is built by His265, His267, Asp269, His270, His332, and His425.

The protein belongs to the NAPE-PLD family. Zn(2+) serves as cofactor.

Its subcellular location is the mitochondrion membrane. The enzyme catalyses an N-acyl-1,2-diacyl-sn-glycero-3-phosphoethanolamine + H2O = an N-acylethanolamine + a 1,2-diacyl-sn-glycero-3-phosphate + H(+). Functionally, hydrolyzes N-acyl-phosphatidylethanolamines (NAPEs) to produce N-acylethanolamines (NAEs). The protein is N-acyl-phosphatidylethanolamine-hydrolyzing phospholipase D, mitochondrial (FMP30) of Saccharomyces cerevisiae (strain ATCC 204508 / S288c) (Baker's yeast).